Reading from the N-terminus, the 207-residue chain is Protein LURP1 (207 aa).

Belongs to the LOR family. Limited to discrete pathogen infection sites in leaves.

In terms of biological role, involved in basal defense against virulent oomycetes. Might be related to the phospholipid scramblase and tubby-like superfamily of membrane tethered transcription factors. This chain is Protein LURP1 (LURP1), found in Arabidopsis thaliana (Mouse-ear cress).